A 316-amino-acid polypeptide reads, in one-letter code: DDRGK domain-containing protein 1 (316 aa).

At 1–3 the chain is on the lumenal side; the sequence is MVE. Residues 4–24 form a helical membrane-spanning segment; sequence LDYLFLGSVGFLTIALMLIIL. The Cytoplasmic portion of the chain corresponds to 25–316; sequence RIIKLYFDEK…VEHVSELTAA (292 aa). Residues 147-187 form a disordered region; it reads LEQEKEKRLQKEREKQMEQEEEERKRKCREREEREKREEEE.

Belongs to the DDRGK1 family.

It localises to the endoplasmic reticulum membrane. Substrate adapter for ufmylation, the covalent attachment of the ubiquitin-like modifier UFM1 to substrate proteins. The protein is DDRGK domain-containing protein 1 of Brugia malayi (Filarial nematode worm).